Here is a 445-residue protein sequence, read N- to C-terminus: Argininosuccinate synthase (445 aa).

Residues 17 to 25 (AFSGGLDTS) and Ala43 each bind ATP. Residue Tyr99 participates in L-citrulline binding. Residues Gly129 and Thr131 each contribute to the ATP site. L-aspartate contacts are provided by Thr131, Asn135, and Asp136. Residue Asn135 coordinates L-citrulline. Asp136 is an ATP binding site. Arg139 and Ser192 together coordinate L-citrulline. ATP is bound at residue Asp194. L-citrulline is bound by residues Thr201, Glu203, and Glu280.

The protein belongs to the argininosuccinate synthase family. Type 2 subfamily. Homotetramer.

The protein resides in the cytoplasm. The catalysed reaction is L-citrulline + L-aspartate + ATP = 2-(N(omega)-L-arginino)succinate + AMP + diphosphate + H(+). The protein operates within amino-acid biosynthesis; L-arginine biosynthesis; L-arginine from L-ornithine and carbamoyl phosphate: step 2/3. This chain is Argininosuccinate synthase (argG), found in Burkholderia multivorans (strain ATCC 17616 / 249).